We begin with the raw amino-acid sequence, 233 residues long: Octanoyltransferase (233 aa).

One can recognise a BPL/LPL catalytic domain in the interval 32–213 (NNIDGILLLL…NFKMIFETDL (182 aa)). Residues 77-84 (RGGNVTYH), 144-146 (AIG), and 157-159 (GFA) contribute to the substrate site. C175 acts as the Acyl-thioester intermediate in catalysis.

This sequence belongs to the LipB family.

The protein localises to the cytoplasm. The enzyme catalyses octanoyl-[ACP] + L-lysyl-[protein] = N(6)-octanoyl-L-lysyl-[protein] + holo-[ACP] + H(+). The protein operates within protein modification; protein lipoylation via endogenous pathway; protein N(6)-(lipoyl)lysine from octanoyl-[acyl-carrier-protein]: step 1/2. Catalyzes the transfer of endogenously produced octanoic acid from octanoyl-acyl-carrier-protein onto the lipoyl domains of lipoate-dependent enzymes. Lipoyl-ACP can also act as a substrate although octanoyl-ACP is likely to be the physiological substrate. The sequence is that of Octanoyltransferase from Clostridium kluyveri (strain ATCC 8527 / DSM 555 / NBRC 12016 / NCIMB 10680 / K1).